A 204-amino-acid chain; its full sequence is tRNA (pseudouridine(54)-N(1))-methyltransferase (204 aa).

S-adenosyl-L-methionine-binding residues include L136 and G158.

This sequence belongs to the methyltransferase superfamily. TrmY family. As to quaternary structure, homodimer.

Its subcellular location is the cytoplasm. It carries out the reaction pseudouridine(54) in tRNA + S-adenosyl-L-methionine = N(1)-methylpseudouridine(54) in tRNA + S-adenosyl-L-homocysteine + H(+). Functionally, specifically catalyzes the N1-methylation of pseudouridine at position 54 (Psi54) in tRNAs. This chain is tRNA (pseudouridine(54)-N(1))-methyltransferase, found in Pyrococcus abyssi (strain GE5 / Orsay).